A 160-amino-acid chain; its full sequence is Salivary gland broad-spectrum antiviral protein (160 aa).

A helical membrane pass occupies residues 17 to 37 (VALGLYFTVVVFVLFITSVNL). N-linked (GlcNAc...) asparagine glycosylation is found at asparagine 62 and asparagine 145.

In terms of tissue distribution, salivary gland (at protein level).

It localises to the membrane. Its function is as follows. (Microbial infection) Modulates replication of Zika virus in salivary glands. Functionally, (Microbial infection) Modulates replication of dengue virus type 2 in salivary glands. (Microbial infection) Modulates replication of chikungunya virus in salivary glands. The sequence is that of Salivary gland broad-spectrum antiviral protein from Aedes aegypti (Yellowfever mosquito).